The sequence spans 379 residues: Fucose-specific lectin g276 (379 aa).

An alpha-L-fucose-binding site is contributed by glutamate 126. Beta-L-fucose contacts are provided by glutamate 126, arginine 163, and tryptophan 185. Alpha-L-fucose contacts are provided by tryptophan 185, arginine 222, and glutamate 234. Beta-L-fucose-binding residues include tryptophan 242 and glutamate 282. Residue tryptophan 289 participates in alpha-L-fucose binding.

Belongs to the fungal fucose-specific lectin family.

Lectin that specifically binds to L-fucose. Is associated with the morphogenesis of the fungus, and plays a role in the formation of the constricting rings involved in nematode-trapping. This Arthrobotrys oligospora (strain ATCC 24927 / CBS 115.81 / DSM 1491) (Nematode-trapping fungus) protein is Fucose-specific lectin g276.